We begin with the raw amino-acid sequence, 284 residues long: Pantothenate synthetase (284 aa).

30–37 (MGNLHDGH) lines the ATP pocket. The active-site Proton donor is His-37. (R)-pantoate is bound at residue Gln-61. Gln-61 provides a ligand contact to beta-alanine. 149–152 (GEKD) serves as a coordination point for ATP. Residue Gln-155 coordinates (R)-pantoate. ATP is bound by residues Ile-178 and 186-189 (LSSR).

Belongs to the pantothenate synthetase family. As to quaternary structure, homodimer.

Its subcellular location is the cytoplasm. It carries out the reaction (R)-pantoate + beta-alanine + ATP = (R)-pantothenate + AMP + diphosphate + H(+). It functions in the pathway cofactor biosynthesis; (R)-pantothenate biosynthesis; (R)-pantothenate from (R)-pantoate and beta-alanine: step 1/1. In terms of biological role, catalyzes the condensation of pantoate with beta-alanine in an ATP-dependent reaction via a pantoyl-adenylate intermediate. In Salmonella paratyphi A (strain ATCC 9150 / SARB42), this protein is Pantothenate synthetase.